A 420-amino-acid chain; its full sequence is Napsin-A (420 aa).

The N-terminal stretch at 1-25 is a signal peptide; it reads MSPPPLLQPLLLLLPLLNVEPSGAT. Positions 26–63 are cleaved as a propeptide — activation peptide; that stretch reads LIRIPLHRVQPGRRILNLLRGWREPAELPKLGAPSPGD. The 322-residue stretch at 78–399 folds into the Peptidase A1 domain; it reads YFGEIGLGTP…MKSSARVGLA (322 aa). Asparagine 90 carries N-linked (GlcNAc...) asparagine glycosylation. Residue aspartate 96 is part of the active site. Cysteine 109 and cysteine 116 are disulfide-bonded. Residue asparagine 133 is glycosylated (N-linked (GlcNAc...) asparagine). The cysteines at positions 274 and 278 are disulfide-linked. Aspartate 283 is an active-site residue. A disulfide bridge links cysteine 317 with cysteine 354. Asparagine 336 is a glycosylation site (N-linked (GlcNAc...) asparagine).

Belongs to the peptidase A1 family. Expressed predominantly in adult lung (type II pneumocytes) and kidney and in fetal lung. Low levels in adult spleen and very low levels in peripheral blood leukocytes.

The protein localises to the secreted. May be involved in processing of pneumocyte surfactant precursors. The polypeptide is Napsin-A (NAPSA) (Homo sapiens (Human)).